We begin with the raw amino-acid sequence, 405 residues long: MKFVDEVSIFVKAGDGGNGMMSFRREKFIEKGGPNGGDGGDGGSVYLEADENLNTLVDYRYTRRFEAQRGEKGGSNDCTGAKGDDLILPVPVGTTVIDSGTQEIIGDLVRPGQRLLVAQGGWHGLGNTRFKSSTNRAPRQTTPGKPGEARDLKLELKVLADVGLLGLPNAGKSTFIRAVSAAKPKVADYPFTTLVPNLGVVSVGRYKSFVVADIPGLIEGAAEGAGLGIRFLKHLARTRLLLHLVDMAPLDGGDPAGAAETILRELEKFSPALTERERWLVLNKADQLLDEEREERLRAVLERLDWQGPVYVISALEREGTEALCQDIMHYLDERARRIAEEPEYAEALAELDRHIEDEARTRLQALDDQRALRRAGLKSADALEDEDDFDDEDDGDGPEIFYVR.

The 159-residue stretch at 1-159 folds into the Obg domain; sequence MKFVDEVSIF…RDLKLELKVL (159 aa). The interval 127–148 is disordered; that stretch reads NTRFKSSTNRAPRQTTPGKPGE. Residues 129-143 show a composition bias toward polar residues; sequence RFKSSTNRAPRQTTP. Residues 160–333 form the OBG-type G domain; it reads ADVGLLGLPN…LCQDIMHYLD (174 aa). Residues 166–173, 191–195, 213–216, 283–286, and 314–316 each bind GTP; these read GLPNAGKS, FTTLV, DIPG, NKAD, and SAL. Residues serine 173 and threonine 193 each contribute to the Mg(2+) site. A compositionally biased stretch (acidic residues) spans 383–398; the sequence is ALEDEDDFDDEDDGDG. Residues 383-405 are disordered; the sequence is ALEDEDDFDDEDDGDGPEIFYVR.

It belongs to the TRAFAC class OBG-HflX-like GTPase superfamily. OBG GTPase family. Monomer. Requires Mg(2+) as cofactor.

The protein localises to the cytoplasm. An essential GTPase which binds GTP, GDP and possibly (p)ppGpp with moderate affinity, with high nucleotide exchange rates and a fairly low GTP hydrolysis rate. Plays a role in control of the cell cycle, stress response, ribosome biogenesis and in those bacteria that undergo differentiation, in morphogenesis control. The protein is GTPase Obg of Azotobacter vinelandii (strain DJ / ATCC BAA-1303).